We begin with the raw amino-acid sequence, 73 residues long: uncharacterized protein (73 aa).

It belongs to the asfivirus I73R family.

It localises to the virion. This is an uncharacterized protein from Ornithodoros (relapsing fever ticks).